The sequence spans 380 residues: Outer membrane protein assembly factor BamB (380 aa).

The N-terminal stretch at 1 to 18 (MVQWKHAALLALALAVVG) is a signal peptide. Cysteine 19 is lipidated: N-palmitoyl cysteine. A lipid anchor (S-diacylglycerol cysteine) is attached at cysteine 19.

Belongs to the BamB family. Part of the Bam complex.

Its subcellular location is the cell outer membrane. Its function is as follows. Part of the outer membrane protein assembly complex, which is involved in assembly and insertion of beta-barrel proteins into the outer membrane. This chain is Outer membrane protein assembly factor BamB, found in Pseudomonas aeruginosa (strain ATCC 15692 / DSM 22644 / CIP 104116 / JCM 14847 / LMG 12228 / 1C / PRS 101 / PAO1).